The primary structure comprises 1188 residues: F-box only protein 38 (1188 aa).

The region spanning 30–75 is the F-box domain; sequence MNQLSHEVLCHIFRYLPLQDIMCMECLSRKLKEAVTLYLRVVRVVD. An interaction with KLF7 region spans residues 59-119; it reads KLKEAVTLYL…LHPRYLERRR (61 aa). 3 short sequence motifs (nuclear export signal) span residues 194-201, 307-316, and 451-460; these read LHLVGVNV, LEVDLGYLII, and LLPSLEFISL. The disordered stretch occupies residues 487-526; that stretch reads ALVSNQNSNNDDNNAQNNNANIHDNNHHHPDDSDEENDFR. A compositionally biased stretch (low complexity) spans 491–509; it reads NQNSNNDDNNAQNNNANIH. Thr591 carries the post-translational modification Phosphothreonine. Ser598, Ser600, and Ser606 each carry phosphoserine. Disordered stretches follow at residues 620 to 666, 685 to 766, and 787 to 909; these read RRYS…FPLE, MKAA…MEEG, and RTSR…STSD. Composition is skewed to basic and acidic residues over residues 621-630 and 685-699; these read RYSEREEKTG and MKAA…KNKD. A compositionally biased stretch (polar residues) spans 703-740; that stretch reads SCSSTTASTVGNSSSHNTASQSPDFVRTVNSGGSSEPS. Phosphoserine is present on residues Ser736 and Ser740. Residues 787 to 798 are compositionally biased toward basic and acidic residues; sequence RTSRCSDEERPS. Residues 849-861 are compositionally biased toward polar residues; sequence SSQPESCDVQSNE. Basic residues predominate over residues 889–900; sequence TKPRHAMKRKRT. The Nuclear localization signal signature appears at 896–899; it reads KRKR.

Part of the SCF (SKP1-CUL1-F-box) E3 ubiquitin-protein ligase complex SCF(FBXO38) composed of CUL1, SKP1, RBX1 and FBXO38. Interacts with KLF7. Interacts with PDCD1/PD-1.

It is found in the cytoplasm. Its subcellular location is the cytosol. The protein localises to the nucleus. Its pathway is protein modification; protein ubiquitination. In terms of biological role, substrate recognition component of a SCF (SKP1-CUL1-F-box protein) E3 ubiquitin-protein ligase complex which mediates the ubiquitination and subsequent proteasomal degradation of PDCD1/PD-1, thereby regulating T-cells-mediated immunity. Required for anti-tumor activity of T-cells by promoting the degradation of PDCD1/PD-1; the PDCD1-mediated inhibitory pathway being exploited by tumors to attenuate anti-tumor immunity and facilitate tumor survival. May indirectly stimulate the activity of transcription factor KLF7, a regulator of neuronal differentiation, without promoting KLF7 ubiquitination. The polypeptide is F-box only protein 38 (Homo sapiens (Human)).